The primary structure comprises 106 residues: UPF0145 protein PputGB1_2909 (106 aa).

It belongs to the UPF0145 family.

This Pseudomonas putida (strain GB-1) protein is UPF0145 protein PputGB1_2909.